A 393-amino-acid chain; its full sequence is Rhizopuspepsin (393 aa).

The signal sequence occupies residues 1-21 (MKFTLISSCIAIAALAVAVDA). Positions 22–68 (APGEKKISIPLAKNPNYKPSAKNAIQKAIAKYNKHKINTSTGGIVPD) are cleaved as a propeptide — activation peptide. The region spanning 85–389 (YYGQVTIGTP…NQGVPEVQIA (305 aa)) is the Peptidase A1 domain. Aspartate 103 is a catalytic residue. Cysteines 116 and 119 form a disulfide. Residue aspartate 286 is part of the active site. Residues cysteine 320 and cysteine 353 are joined by a disulfide bond.

It belongs to the peptidase A1 family.

It carries out the reaction Hydrolysis of proteins with broad specificity similar to that of pepsin A, preferring hydrophobic residues at P1 and P1'. Clots milk and activates trypsinogen. Does not cleave 4-Gln-|-His-5, but does cleave 10-His-|-Leu-11 and 12-Val-|-Glu-13 in B chain of insulin.. This chain is Rhizopuspepsin, found in Rhizopus chinensis (Bread mold).